We begin with the raw amino-acid sequence, 365 residues long: Chorismate synthase (365 aa).

NADP(+) is bound at residue Arg46. FMN contacts are provided by residues Arg123–Ser125, Asn241–Gly242, Gly281, Lys296–Ser300, and Arg322.

It belongs to the chorismate synthase family. In terms of assembly, homotetramer. It depends on FMNH2 as a cofactor.

The catalysed reaction is 5-O-(1-carboxyvinyl)-3-phosphoshikimate = chorismate + phosphate. It participates in metabolic intermediate biosynthesis; chorismate biosynthesis; chorismate from D-erythrose 4-phosphate and phosphoenolpyruvate: step 7/7. In terms of biological role, catalyzes the anti-1,4-elimination of the C-3 phosphate and the C-6 proR hydrogen from 5-enolpyruvylshikimate-3-phosphate (EPSP) to yield chorismate, which is the branch point compound that serves as the starting substrate for the three terminal pathways of aromatic amino acid biosynthesis. This reaction introduces a second double bond into the aromatic ring system. The protein is Chorismate synthase of Helicobacter pylori (strain ATCC 700392 / 26695) (Campylobacter pylori).